Here is a 339-residue protein sequence, read N- to C-terminus: GDP-fucose transporter 1 (339 aa).

Helical transmembrane passes span 9–29 (SVRIAAVVAAYWTISISLVFL), 45–65 (LFVTWYQCVVTVICLFFLSLL), 82–102 (LSVAKQVLPLSAVFVGMITFN), 111–133 (VSFYNVGRSLTTVFNVICTYVIL), 136–156 (STSYKAVICCAVIIGGFLMGV), 165–185 (ISYSGVLFGVLASLCVSLNAI), 209–229 (ACFLFLPLMALLGEIGEVAHF), and 237–257 (FWLMMTIGGVFGIAIGYITGL). A disordered region spans residues 319–339 (AHTIQASKDDKALQEDGQTKV). The segment covering 325–339 (SKDDKALQEDGQTKV) has biased composition (basic and acidic residues).

Belongs to the TPT transporter family. SLC35C subfamily.

The protein resides in the golgi apparatus membrane. The catalysed reaction is GMP(out) + GDP-beta-L-fucose(in) = GMP(in) + GDP-beta-L-fucose(out). Its function is as follows. Antiporter specific for GDP-l-fucose and depending on the concomitant reverse transport of GMP. Involved in GDP-fucose import from the cytoplasm into the Golgi lumen. The sequence is that of GDP-fucose transporter 1 (slc35c1) from Nematostella vectensis (Starlet sea anemone).